A 157-amino-acid chain; its full sequence is SsrA-binding protein (157 aa).

Residues 135–151 show a composition bias toward basic and acidic residues; it reads DKRETEKKRDWSREKGR. Residues 135 to 157 are disordered; the sequence is DKRETEKKRDWSREKGRLLRARG.

This sequence belongs to the SmpB family.

The protein resides in the cytoplasm. Required for rescue of stalled ribosomes mediated by trans-translation. Binds to transfer-messenger RNA (tmRNA), required for stable association of tmRNA with ribosomes. tmRNA and SmpB together mimic tRNA shape, replacing the anticodon stem-loop with SmpB. tmRNA is encoded by the ssrA gene; the 2 termini fold to resemble tRNA(Ala) and it encodes a 'tag peptide', a short internal open reading frame. During trans-translation Ala-aminoacylated tmRNA acts like a tRNA, entering the A-site of stalled ribosomes, displacing the stalled mRNA. The ribosome then switches to translate the ORF on the tmRNA; the nascent peptide is terminated with the 'tag peptide' encoded by the tmRNA and targeted for degradation. The ribosome is freed to recommence translation, which seems to be the essential function of trans-translation. The chain is SsrA-binding protein from Rhodopseudomonas palustris (strain BisB5).